Reading from the N-terminus, the 312-residue chain is Glycine--tRNA ligase alpha subunit (312 aa).

The protein belongs to the class-II aminoacyl-tRNA synthetase family. Tetramer of two alpha and two beta subunits.

The protein localises to the cytoplasm. It catalyses the reaction tRNA(Gly) + glycine + ATP = glycyl-tRNA(Gly) + AMP + diphosphate. The protein is Glycine--tRNA ligase alpha subunit of Methylobacillus flagellatus (strain ATCC 51484 / DSM 6875 / VKM B-1610 / KT).